Consider the following 347-residue polypeptide: 5-deoxyribose 1-phosphate isomerase (347 aa).

Substrate contacts are provided by residues 48-50, arginine 91, and glutamine 198; that span reads RGA. Aspartate 239 (proton donor) is an active-site residue. 249–250 lines the substrate pocket; that stretch reads NK.

It belongs to the EIF-2B alpha/beta/delta subunits family. DrdI subfamily.

The catalysed reaction is 5-deoxy-alpha-D-ribose 1-phosphate = 5-deoxy-D-ribulose 1-phosphate. Its pathway is carbohydrate degradation. Its function is as follows. Catalyzes the isomerization of 5-deoxy-alpha-D-ribose 1-phosphate to 5-deoxy-D-ribulose 1-phosphate, as part of a 5-deoxyribose salvage pathway that recycles this toxic radical SAM enzyme by-product to mainstream metabolites. The polypeptide is 5-deoxyribose 1-phosphate isomerase (Bacillus cereus (strain ATCC 14579 / DSM 31 / CCUG 7414 / JCM 2152 / NBRC 15305 / NCIMB 9373 / NCTC 2599 / NRRL B-3711)).